The chain runs to 374 residues: MSPAKVSANDVPMHGNGFYSSNSALQHSAMLNALPLLAAAAAASKAKQQEEQENSRPFAILEFGSAHGNNSHTPITTVLKSRAPAPSREIHLQFNDRPTNDFSTLATNLTTMTWPVSNAIFTSLLPASFYSRVSPKGSVDVAFSLAALHHLDRVTPVPPEGPIPTHEVRQAEFRAQAHADLLSFLSHRAEEIVPGGGLVLSFVGQELGPNGEEITNYAGPVDACRSAMIDMLQAGVLSPAVANVFEVPAYNRTIADVRRTLAEGEVVAAWEVEEVFERKVVHPALQELEARREAAPGKEEEHAEWYARTVVDWLMAVVAGYFVKAVREGMGVTDQTVLDGLLAEWVERTRGRFLEGHRNEPVECWFVYVRLGRK.

S-adenosyl-L-homocysteine-binding residues include Y19, N70, D96, S128, and F129. F245 is a Mg(2+) binding site.

It belongs to the methyltransferase superfamily. Type-7 methyltransferase family.

Its pathway is secondary metabolite biosynthesis. Its function is as follows. O-methyltransferase; part of the cluster that mediates the biosynthesis of acurin A, a highly reduced polyketide coupled to a serine via a peptide bond. The activities of the highly reducing polyketide synthase acrA and the nonribosomal peptide synthetase acrB are collectively responsible for the synthesis of the acurin A core structure with a heptaketide backbone produced by acrA covalently fused to a L-serine by acrB. After the formation of the PK-NRP hybrid product, it is detached from acrB by reductive release to set up the formation of the lactam ring by aldol condensation. The hydrolyase acrC then catalyzes water loss to generate a double bond in the ring. This double bond is probably reduced, which is followed by three oxidations at C-22 to generate the carboxylic acid moiety, involving probably the FAD-binding monooxygenase acrE and the cytochrome P450 monooxygenases acrD and acrF. Finally, a last methylation step performed by the O-methyltransferase acrG leads to the production of acurin A. The protein is O-methyltransferase acrG of Aspergillus aculeatus (strain ATCC 16872 / CBS 172.66 / WB 5094).